We begin with the raw amino-acid sequence, 1079 residues long: MLGDRNEGMATIPALNQIQFEGFCRFLDQGLIEELSQFPKGNSFLEYFRDEEIDFQLFSKTYHLVKPLIKERDARYESLTYSSKLYVSAGFLWKDKRPQKKTICIGNLPLMNSVGTFIVNGISRVVINQILQSPGIYYGSELDYQGFTVYIATIISDWGGRLKLEIDKKERIWARVSRKQKISILVLSSAMGSNLKEILENACYPEIFLALNLKKECGFKEKKYAILELYAKYKDFTEYKDSLDFDFLCETLRKTFFSHKCELGRVGRQNINRRLNLDISHKNTFLLPQDILAATNHLIGMKFGMGTLDDMNHLKNKRIRSVADLLQDQFGLALNRLEDAVCDTIGRAIAKDKIPTLRHLATSTPLTTTYESFFKLHPLSHVFDETNPLTHIVHGRKWSFLGPGGLTERTARFRVRDIHPSNYGRICPIDTSEGIKVGLIGYLATHARIGDCGSLESPFYEMSEKSKRVRMLSLSSRKEEYYMIGTGNSLALNQGIQEEQIIPARYRQEFLTIAWEEVHFRSVFPFQYFSIGVSLIPFLEHNDATRALMSSNMQRQAVPLSRSEKCIVGTGFEGQVALDSGIPLITEHAGKIISTHTDKILLSVNGETLSSPLVLFQRSNKNTWIHQTPQVSRGNCTKKGQILADGAATVGGELALGKNVLVGYMPWEGYNFEDAVLISERLVYEDIYTSFHIRKCEIKIFMTMKGPEKITNQIPHIDPHLLRNLDKNGVVILGSWVEAGDILVGKLTPELVELSPEKRLIEALFDAPIGTTRQSCLKLPIWGRGRVIDVRWIHKGSASRSNPERIRVYILQKRKIKVGDKVAGRHGNKGIVSKILPIQDMPYLQDGRPLDMVFNPLGVPSRMNVGQIFECSLGLAGGLLDRHYRIAPFDERYEEEASRKLVFSELYEASKQTGNPWVFEPEYPGKSIIFDGRTGDPFEQPVIVGQSYILKLIHQVDDKIHGRSTGPYSRVTQQPVKGRARRGGQRVGEMEVWALQGLGVAHILEEILTYKSDHLTTRNQIFGTLLLGGALPKPEPEDRPESFRLLVRELRSLSLELNYFLVSKNKKNFNFWKMNRVEV.

Residues 963–982 are disordered; sequence RSTGPYSRVTQQPVKGRARR. Positions 966-975 are enriched in polar residues; that stretch reads GPYSRVTQQP.

It belongs to the RNA polymerase beta chain family. In terms of assembly, in plastids the minimal PEP RNA polymerase catalytic core is composed of four subunits: alpha, beta, beta', and beta''. When a (nuclear-encoded) sigma factor is associated with the core the holoenzyme is formed, which can initiate transcription.

Its subcellular location is the plastid. The protein localises to the chloroplast. It carries out the reaction RNA(n) + a ribonucleoside 5'-triphosphate = RNA(n+1) + diphosphate. DNA-dependent RNA polymerase catalyzes the transcription of DNA into RNA using the four ribonucleoside triphosphates as substrates. The chain is DNA-directed RNA polymerase subunit beta from Pelargonium hortorum (Common geranium).